A 697-amino-acid polypeptide reads, in one-letter code: Ion-translocating oxidoreductase complex subunit C (697 aa).

4Fe-4S ferredoxin-type domains are found at residues Ala-366–Tyr-397 and Lys-407–Tyr-436. Positions 377, 380, 383, 387, 416, 419, 422, and 426 each coordinate [4Fe-4S] cluster. A disordered region spans residues Ala-576 to Ala-674. Residues Glu-581–Lys-596 are compositionally biased toward basic and acidic residues. A compositionally biased stretch (low complexity) spans Ala-597 to Gln-615. Residues Glu-619–Lys-634 are compositionally biased toward basic and acidic residues. Low complexity predominate over residues Ala-635–Gln-653. The segment covering Glu-657 to Lys-672 has biased composition (basic and acidic residues).

Belongs to the 4Fe4S bacterial-type ferredoxin family. RnfC subfamily. As to quaternary structure, the complex is composed of six subunits: RnfA, RnfB, RnfC, RnfD, RnfE and RnfG. [4Fe-4S] cluster is required as a cofactor.

It is found in the cell inner membrane. Its function is as follows. Part of a membrane-bound complex that couples electron transfer with translocation of ions across the membrane. The polypeptide is Ion-translocating oxidoreductase complex subunit C (Yersinia enterocolitica serotype O:8 / biotype 1B (strain NCTC 13174 / 8081)).